The chain runs to 235 residues: Ribonuclease 3 (235 aa).

One can recognise an RNase III domain in the interval 6–131 (IDQLFKLTGH…LIAVMYLDGG (126 aa)). Residue E44 participates in Mg(2+) binding. The active site involves D48. Residues D117 and E120 each contribute to the Mg(2+) site. Residue E120 is part of the active site. One can recognise a DRBM domain in the interval 156–225 (DAKTELQEWA…AEKILRREGV (70 aa)).

Belongs to the ribonuclease III family. As to quaternary structure, homodimer. The cofactor is Mg(2+).

The protein localises to the cytoplasm. The enzyme catalyses Endonucleolytic cleavage to 5'-phosphomonoester.. Its function is as follows. Digests double-stranded RNA. Involved in the processing of primary rRNA transcript to yield the immediate precursors to the large and small rRNAs (23S and 16S). Processes some mRNAs, and tRNAs when they are encoded in the rRNA operon. Processes pre-crRNA and tracrRNA of type II CRISPR loci if present in the organism. In Bartonella tribocorum (strain CIP 105476 / IBS 506), this protein is Ribonuclease 3.